Consider the following 794-residue polypeptide: Protein SPA1-RELATED 4 (794 aa).

Residues 1-268 enclose the Protein kinase domain; the sequence is MKGSSESSSR…MSELLQSEFI (268 aa). Residues 126 to 165 are disordered; it reads SCSDSGSDEDATTKSREIGSSRQEEILSERRSKQQEEVKK. Residues 136–165 show a composition bias toward basic and acidic residues; sequence ATTKSREIGSSRQEEILSERRSKQQEEVKK. Residues 272–326 are a coiled coil; that stretch reads RENLEEREAAMELRDRIEEQELLLEFLFLIQQRKQEAADKLQDTISLLSSDIDQV. 2 disordered regions span residues 352-373 and 428-447; these read QGAE…EESK and GRSS…INDS. Positions 358-369 are enriched in acidic residues; the sequence is AAEEENDDNSID. WD repeat units follow at residues 482 to 521, 531 to 571, 574 to 614, 616 to 656, 660 to 698, 707 to 746, and 762 to 794; these read NSSN…KDGR, ASRS…LVTE, EHEK…SIGT, KTKA…LPLC, GHHK…SGIN, GHTN…PVLS, and DASQ…LEMV. A DWD box motif is present at residues 635–649; the sequence is AFGSADHKVYYYDLR.

In terms of assembly, interacts with COP1 and CO. Binds to CRY1 in response to blue light, this interaction prevents SPA1/COP1 complex formation and thus avoid COP1-dependent degradation of the transcription factor HY5 by the proteasome and promotes hypocotyl elongation.

The protein resides in the nucleus. Functionally, repressor of photomorphogenesis in the light. Probably part of the COP1/SPA E3 ubiquitin-protein ligase complex. This is Protein SPA1-RELATED 4 (SPA4) from Arabidopsis thaliana (Mouse-ear cress).